A 341-amino-acid polypeptide reads, in one-letter code: L-threonine 3-dehydrogenase (341 aa).

Position 38 (Cys-38) interacts with Zn(2+). Active-site charge relay system residues include Thr-40 and His-43. Residues His-63, Glu-64, Cys-93, Cys-96, Cys-99, and Cys-107 each coordinate Zn(2+). NAD(+)-binding positions include Ile-175, Asp-195, Arg-200, Leu-262–Ile-264, and Ile-286–Tyr-287.

Belongs to the zinc-containing alcohol dehydrogenase family. Homotetramer. It depends on Zn(2+) as a cofactor.

It localises to the cytoplasm. It carries out the reaction L-threonine + NAD(+) = (2S)-2-amino-3-oxobutanoate + NADH + H(+). It functions in the pathway amino-acid degradation; L-threonine degradation via oxydo-reductase pathway; glycine from L-threonine: step 1/2. Functionally, catalyzes the NAD(+)-dependent oxidation of L-threonine to 2-amino-3-ketobutyrate. The polypeptide is L-threonine 3-dehydrogenase (Proteus mirabilis (strain HI4320)).